Consider the following 424-residue polypeptide: UDP-sugar transporter protein SLC35A5 (424 aa).

Residues 1 to 8 (MEKQCCSH) lie on the Cytoplasmic side of the membrane. A helical transmembrane segment spans residues 9–29 (PVICSLSTMYTFLLGAIFIAL). Residues 30–53 (SSSRILLVKYSANEENKYDYLPTT) lie on the Lumenal side of the membrane. The chain crosses the membrane as a helical span at residues 54-74 (VNVCSELVKLVFCVLVSFCVI). The Cytoplasmic segment spans residues 75–93 (KKDHQSRNLKYASWKEFSD). A helical transmembrane segment spans residues 94–116 (FMKWSIPAFLYFLDNLIVFYVLS). The Lumenal portion of the chain corresponds to 117–119 (YLQ). Residues 120–142 (PAMAVIFSNFSIITTALLFRIVL) traverse the membrane as a helical segment. Over 143–147 (KRRLN) the chain is Cytoplasmic. The chain crosses the membrane as a helical span at residues 148 to 168 (WIQWASLLTLFLSIVALTAGT). At 169–228 (KTLQHNLAGRGFHHDAFFSPSNSCLLFRSECPRKDNCTAKEWTFPEAKWNTTARVFSHIR) the chain is on the lumenal side. A glycan (N-linked (GlcNAc...) asparagine) is linked at Asn-204. Residues 229 to 249 (LGMGHVLIIVQCFISSMANIY) traverse the membrane as a helical segment. Topologically, residues 250 to 263 (NEKILKEGNQLTES) are cytoplasmic. The chain crosses the membrane as a helical span at residues 264–284 (IFIQNSKLYFFGILFNGLTLG). Over 285 to 303 (LQRSNRDQIKNCGFFYGHS) the chain is Lumenal. The helical transmembrane segment at 304-324 (AFSVALIFVTAFQGLSVAFIL) threads the bilayer. The Cytoplasmic segment spans residues 325-330 (KFLDNM). Residues 331-351 (FHVLMAQVTTVIITTVSVLVF) traverse the membrane as a helical segment. Residues 352–354 (DFR) lie on the Lumenal side of the membrane. A helical transmembrane segment spans residues 355 to 375 (PSLEFFLEAPSVLLSIFIYNA). The Cytoplasmic portion of the chain corresponds to 376–424 (SKPQVPEYAPRQERIRDLSGNLWERSSGDGEELERLTKPKSDESDEDTF). A phosphoserine mark is found at Ser-394, Ser-416, and Ser-419. The tract at residues 397 to 424 (LWERSSGDGEELERLTKPKSDESDEDTF) is disordered. The segment covering 408 to 417 (LERLTKPKSD) has biased composition (basic and acidic residues).

This sequence belongs to the nucleotide-sugar transporter family. SLC35A subfamily. As to quaternary structure, probably forms homooligomers and heterooligomers with SLC35A1, SLC35A2, SLC35A3 and SLC35A4.

The protein resides in the golgi apparatus membrane. The enzyme catalyses UMP(out) + UDP-alpha-D-glucuronate(in) = UMP(in) + UDP-alpha-D-glucuronate(out). It carries out the reaction UMP(out) + UDP-N-acetyl-alpha-D-glucosamine(in) = UMP(in) + UDP-N-acetyl-alpha-D-glucosamine(out). The catalysed reaction is UDP-N-acetyl-alpha-D-galactosamine(in) + UMP(out) = UDP-N-acetyl-alpha-D-galactosamine(out) + UMP(in). In terms of biological role, probable UDP-sugar:UMP transmembrane antiporter involved in UDP-alpha-D-glucuronate/UDP-GlcA, UDP-GlcNAc/UDP-N-acetyl-alpha-D-glucosamine and UDP-N-acetyl-alpha-D-galactosamine/UDP-GalNAc transport from the cytosol to the lumen of the Golgi. The polypeptide is UDP-sugar transporter protein SLC35A5 (Homo sapiens (Human)).